Here is a 47-residue protein sequence, read N- to C-terminus: RGSVDYKDDDDKTISCTNPKQCYPHCKKETGYPNAKCMNRKCKCFGR.

Positions 1–12 (RGSVDYKDDDDK) are cleaved as a signal peptide. Disulfide bonds link cysteine 16/cysteine 37, cysteine 22/cysteine 42, and cysteine 26/cysteine 44.

Belongs to the short scorpion toxin superfamily. Potassium channel inhibitor family. Alpha-KTx 07 subfamily. Expressed by the venom gland.

The protein localises to the secreted. In terms of biological role, potent inhibitor of the A-type voltage-gated potassium channels. Most potent inhibitor of Kv1.2/KCNA2 channels. Reversibly block the Shaker B potassium-channels (Kv1.1 sub-family). This is Potassium channel toxin alpha-KTx 7.1 (PTX-1) from Pandinus imperator (Emperor scorpion).